The chain runs to 123 residues: Small ribosomal subunit protein uS12cz/uS12cy (123 aa).

It belongs to the universal ribosomal protein uS12 family. Part of the 30S ribosomal subunit.

It localises to the plastid. Its subcellular location is the chloroplast. In terms of biological role, with S4 and S5 plays an important role in translational accuracy. Located at the interface of the 30S and 50S subunits. The protein is Small ribosomal subunit protein uS12cz/uS12cy (rps12-A) of Coffea arabica (Arabian coffee).